Consider the following 203-residue polypeptide: Dephospho-CoA kinase (203 aa).

Positions 4 to 203 (VIGITGGIAT…EEGYIQSESE (200 aa)) constitute a DPCK domain. 12–17 (ATGKST) provides a ligand contact to ATP.

This sequence belongs to the CoaE family.

It is found in the cytoplasm. The catalysed reaction is 3'-dephospho-CoA + ATP = ADP + CoA + H(+). It functions in the pathway cofactor biosynthesis; coenzyme A biosynthesis; CoA from (R)-pantothenate: step 5/5. Functionally, catalyzes the phosphorylation of the 3'-hydroxyl group of dephosphocoenzyme A to form coenzyme A. The sequence is that of Dephospho-CoA kinase from Staphylococcus epidermidis (strain ATCC 12228 / FDA PCI 1200).